The primary structure comprises 344 residues: tRNA N6-adenosine threonylcarbamoyltransferase (344 aa).

Fe cation-binding residues include histidine 111 and histidine 115. Residues 134–138, aspartate 167, glycine 180, aspartate 184, and asparagine 277 each bind substrate; that span reads LVSGG. Position 305 (aspartate 305) interacts with Fe cation.

Belongs to the KAE1 / TsaD family. Fe(2+) serves as cofactor.

It is found in the cytoplasm. The enzyme catalyses L-threonylcarbamoyladenylate + adenosine(37) in tRNA = N(6)-L-threonylcarbamoyladenosine(37) in tRNA + AMP + H(+). Functionally, required for the formation of a threonylcarbamoyl group on adenosine at position 37 (t(6)A37) in tRNAs that read codons beginning with adenine. Is involved in the transfer of the threonylcarbamoyl moiety of threonylcarbamoyl-AMP (TC-AMP) to the N6 group of A37, together with TsaE and TsaB. TsaD likely plays a direct catalytic role in this reaction. The sequence is that of tRNA N6-adenosine threonylcarbamoyltransferase from Microcystis aeruginosa (strain NIES-843 / IAM M-2473).